We begin with the raw amino-acid sequence, 540 residues long: Glucose-6-phosphate isomerase (540 aa).

Glu350 acts as the Proton donor in catalysis. Active-site residues include His381 and Lys503.

Belongs to the GPI family.

The protein localises to the cytoplasm. It carries out the reaction alpha-D-glucose 6-phosphate = beta-D-fructose 6-phosphate. It functions in the pathway carbohydrate biosynthesis; gluconeogenesis. It participates in carbohydrate degradation; glycolysis; D-glyceraldehyde 3-phosphate and glycerone phosphate from D-glucose: step 2/4. Its function is as follows. Catalyzes the reversible isomerization of glucose-6-phosphate to fructose-6-phosphate. This Burkholderia multivorans (strain ATCC 17616 / 249) protein is Glucose-6-phosphate isomerase.